Reading from the N-terminus, the 218-residue chain is Probable transaldolase (218 aa).

The Schiff-base intermediate with substrate role is filled by lysine 84.

It belongs to the transaldolase family. Type 3B subfamily.

The protein localises to the cytoplasm. It carries out the reaction D-sedoheptulose 7-phosphate + D-glyceraldehyde 3-phosphate = D-erythrose 4-phosphate + beta-D-fructose 6-phosphate. The protein operates within carbohydrate degradation; pentose phosphate pathway; D-glyceraldehyde 3-phosphate and beta-D-fructose 6-phosphate from D-ribose 5-phosphate and D-xylulose 5-phosphate (non-oxidative stage): step 2/3. Its function is as follows. Transaldolase is important for the balance of metabolites in the pentose-phosphate pathway. The sequence is that of Probable transaldolase from Bartonella henselae (strain ATCC 49882 / DSM 28221 / CCUG 30454 / Houston 1) (Rochalimaea henselae).